A 49-amino-acid polypeptide reads, in one-letter code: uncharacterized protein (49 aa).

A helical transmembrane segment spans residues 31–48 (PDLYTIIVSYFSIFSLFF).

It is found in the membrane. This is an uncharacterized protein from Saccharomyces cerevisiae (strain ATCC 204508 / S288c) (Baker's yeast).